A 1338-amino-acid polypeptide reads, in one-letter code: Thioester-containing protein 1 allele R1 (1338 aa).

The signal sequence occupies residues 1-21; that stretch reads MWQFIRSRILTVIIFIGAAHG. N-linked (GlcNAc...) asparagine glycosylation is found at N68, N199, N242, N312, and N481. A may contain the cleavage site region spans residues 580–609; the sequence is ENEFDIFHSLGLFARTLDDILFDSANEKTG. N-linked (GlcNAc...) asparagine glycans are attached at residues N637, N728, and N813. Residues 859-862 constitute a cross-link (isoglutamyl cysteine thioester (Cys-Gln)); that stretch reads CGEQ. N-linked (GlcNAc...) asparagine glycosylation is found at N919 and N1065. 3 disulfides stabilise this stretch: C1217-C1283, C1326-C1338, and C1329-C1334.

In terms of assembly, heterodimer of a TEP1-N chain and an TEP1-C chain non-covalently linked. Forms a complex composed of TEP1-N and TEP1-C heterodimer, LRIM1 and APL1C; the interaction stabilizes TEP1-N and TEP1-C heterodimer, prevents its binding to tissues while circulating in the hemolymph and protects the thioester bond from hydrolysis. Mature TEP1 and to a lesser extent full-length TEP1 interact with SPCLIP1; the interaction is induced by microbial infection. Post-translationally, in the hemolymph, the full-length protein is cleaved by an unknow protease into a 75kDa N-terminal (TEP1-N) chain and an 80kDa C-terminal (TEP1-C) chain which remain non-covalently linked. The TEP1-C chain contains the thioester bond which covalently binds to the pathogen surface. Cleavage is induced by bacterial infection or aseptic wound injury. During embryonic and pupal development, the cleaved form is the predominant form. In terms of processing, N-glycosylated.

The protein resides in the secreted. Plays an essential role in the innate immune response against bacteria, fungi and protozoa infection. After proteolytic cleavage, the protein C-terminus binds covalently through a thioester bond to the pathogen surface resulting in pathogen clearance either by melanization or lysis. Initiate the recruitment and activation of a cascade of proteases, mostly of CLIP-domain serine proteases, which leads to the proteolytic cleavage of the prophenoloxidase (PPO) into active phenoloxidase (PO), the rate-limiting enzyme in melanin biosynthesis. In response to parasite P.berghei-mediated infection, binds to and mediates killing of ookinetes, as they egress from midgut epithelial cells into the basal labyrinth, by both lysis and melanization. During bacterial infection, binds to both Gram-positive and Gram-negative bacteria but only promotes phagocytosis of Gram-negative bacteria. Promotes the accumulation of SPCLIP1 onto the surface of P.berghei ookinetes and bacterium E.coli which leads to the melanization of the pathogen. Recruits CLIPA2 to bacteria surface. In response to bacterial infection, required for periostial hemocyte aggregation, but not for the aggregation of sessile hemocytes in non-periostial regions. During the late stage of fungus B.bassiana-mediated infection, required for the initiation of hyphae melanization by binding to the surface of hyphae and recruiting prophenoloxidase PPO to them. Plays a role in male fertility by binding to defective sperm cells and promoting their removal during spermatogenesis. Its function is as follows. Binds to and mediates killing of parasite P.bergei ookinetes by lysis and melanization. In terms of biological role, binds covalently through a thioester bond to the pathogen surface resulting in pathogen clearance. The sequence is that of Thioester-containing protein 1 allele R1 from Anopheles gambiae (African malaria mosquito).